Here is a 230-residue protein sequence, read N- to C-terminus: Large ribosomal subunit protein uL1c (230 aa).

The protein belongs to the universal ribosomal protein uL1 family. Part of the 50S ribosomal subunit.

It localises to the plastid. The protein resides in the chloroplast. Binds directly to 23S rRNA. Might be involved in E site tRNA release (Potential). The protein is Large ribosomal subunit protein uL1c (rpl1) of Trieres chinensis (Marine centric diatom).